Consider the following 435-residue polypeptide: Citrate synthase (435 aa).

Active-site residues include H311 and D370.

It belongs to the citrate synthase family.

It catalyses the reaction oxaloacetate + acetyl-CoA + H2O = citrate + CoA + H(+). Its pathway is carbohydrate metabolism; tricarboxylic acid cycle; isocitrate from oxaloacetate: step 1/2. The sequence is that of Citrate synthase (gltA) from Rickettsia slovaca (strain 13-B).